The primary structure comprises 596 residues: Elongation factor 4 (596 aa).

Residues 2–184 (KHIRNFSIIA…VIVEQIPPPE (183 aa)) enclose the tr-type G domain. GTP is bound by residues 14–19 (DHGKST) and 131–134 (NKID).

It belongs to the TRAFAC class translation factor GTPase superfamily. Classic translation factor GTPase family. LepA subfamily.

The protein resides in the cell inner membrane. It carries out the reaction GTP + H2O = GDP + phosphate + H(+). Functionally, required for accurate and efficient protein synthesis under certain stress conditions. May act as a fidelity factor of the translation reaction, by catalyzing a one-codon backward translocation of tRNAs on improperly translocated ribosomes. Back-translocation proceeds from a post-translocation (POST) complex to a pre-translocation (PRE) complex, thus giving elongation factor G a second chance to translocate the tRNAs correctly. Binds to ribosomes in a GTP-dependent manner. The protein is Elongation factor 4 of Shewanella pealeana (strain ATCC 700345 / ANG-SQ1).